Here is a 58-residue protein sequence, read N- to C-terminus: Small ribosomal subunit protein bS21 (58 aa).

The disordered stretch occupies residues 28 to 58 (VLQDIRKHEHYEKPSIKKKKKSEAARKKKRF). The span at 31–42 (DIRKHEHYEKPS) shows a compositional bias: basic and acidic residues. The span at 43–58 (IKKKKKSEAARKKKRF) shows a compositional bias: basic residues.

This sequence belongs to the bacterial ribosomal protein bS21 family.

The polypeptide is Small ribosomal subunit protein bS21 (Syntrophomonas wolfei subsp. wolfei (strain DSM 2245B / Goettingen)).